Here is a 400-residue protein sequence, read N- to C-terminus: Cartilage-associated protein (400 aa).

An N-terminal signal peptide occupies residues 1 to 25; sequence MGPRSPTAALLVLLCVGCAPTPGRG. N-linked (GlcNAc...) asparagine glycans are attached at residues asparagine 86 and asparagine 362.

It belongs to the leprecan family. Found in articular chondrocytes. Expressed in a variety of tissues.

It is found in the secreted. Its subcellular location is the extracellular space. The protein resides in the extracellular matrix. Its function is as follows. Necessary for efficient 3-hydroxylation of fibrillar collagen prolyl residues. In Mus musculus (Mouse), this protein is Cartilage-associated protein (Crtap).